We begin with the raw amino-acid sequence, 928 residues long: Heme/hemopexin-binding protein (928 aa).

The signal sequence occupies residues 1 to 21 (MYKLNVISLIILTTCSGAAYA). 10 tandem repeats follow at residues 101–106 (NGKVYL), 149–154 (KDRQVL), 155–160 (KEGLVL), 161–166 (KDGQVV), 167–172 (KEGQVI), 205–210 (NGKVYL), 279–284 (NGKVVL), 410–415 (NGKVNL), 635–640 (NGFVHL), and 674–679 (NGKVSM). The segment at 101 to 679 (NGKVYLANPN…RLGMNGKVSM (579 aa)) is 6 X 6 AA approximate repeats. Residues 149-172 (KDRQVLKEGLVLKDGQVVKEGQVI) are 4 X 6 AA approximate tandem repeats.

The protein localises to the secreted. Binds heme/hemopexin complexes. The polypeptide is Heme/hemopexin-binding protein (hxuA) (Haemophilus influenzae).